The sequence spans 62 residues: Small ribosomal subunit protein eS31 (62 aa).

Zn(2+) is bound by residues C29, C32, C48, and C51. The C4-type zinc finger occupies 29 to 51; that stretch reads CPRCGSFMAFHKWPVPRWHCGKC.

The protein belongs to the eukaryotic ribosomal protein eS31 family. As to quaternary structure, part of the 30S ribosomal subunit. Zn(2+) serves as cofactor.

In Hyperthermus butylicus (strain DSM 5456 / JCM 9403 / PLM1-5), this protein is Small ribosomal subunit protein eS31.